The chain runs to 155 residues: Protein-export protein SecB (155 aa).

It belongs to the SecB family. As to quaternary structure, homotetramer, a dimer of dimers. One homotetramer interacts with 1 SecA dimer.

It is found in the cytoplasm. One of the proteins required for the normal export of preproteins out of the cell cytoplasm. It is a molecular chaperone that binds to a subset of precursor proteins, maintaining them in a translocation-competent state. It also specifically binds to its receptor SecA. This chain is Protein-export protein SecB, found in Methylococcus capsulatus (strain ATCC 33009 / NCIMB 11132 / Bath).